The primary structure comprises 310 residues: Protein RL1 (310 aa).

A compositionally biased stretch (polar residues) spans methionine 1–threonine 12. Residues methionine 1–histidine 44 are disordered. The span at threonine 35–histidine 44 shows a compositional bias: basic and acidic residues. Positions leucine 153–arginine 159 are involved in the interaction with host DDB1. Residues glutamate 205–aspartate 252 are disordered. A compositionally biased stretch (low complexity) spans threonine 238–threonine 248.

Belongs to the HHV-5 HKLF1 family. In terms of assembly, interacts with host adaptor protein DDB1; this interaction allows RL1 to recruit the cullin4-RING E3 ubiquitin ligase (CRL4) complex and promote SLN11 degradation.

Its function is as follows. Degrades the host antiviral factor SLFN11 via the cullin4-RING E3 ubiquitin ligase (CRL4) complex. This chain is Protein RL1 (RL1), found in Human cytomegalovirus (strain Merlin) (HHV-5).